We begin with the raw amino-acid sequence, 189 residues long: Casparian strip membrane protein 2 (189 aa).

The interval methionine 1 to glycine 21 is disordered. The Cytoplasmic portion of the chain corresponds to methionine 1–glycine 25. A helical membrane pass occupies residues leucine 26–leucine 46. The Extracellular portion of the chain corresponds to serine 47–threonine 73. The helical transmembrane segment at phenylalanine 74–leucine 94 threads the bilayer. Residues serine 95–arginine 108 are Cytoplasmic-facing. A helical membrane pass occupies residues isoleucine 109 to alanine 129. Residues alanine 130–leucine 163 lie on the Extracellular side of the membrane. A helical membrane pass occupies residues valine 164–isoleucine 184. Residues serine 185–histidine 189 lie on the Cytoplasmic side of the membrane.

This sequence belongs to the Casparian strip membrane proteins (CASP) family. As to quaternary structure, homodimer and heterodimers.

The protein localises to the cell membrane. Regulates membrane-cell wall junctions and localized cell wall deposition. Required for establishment of the Casparian strip membrane domain (CSD) and the subsequent formation of Casparian strips, a cell wall modification of the root endodermis that determines an apoplastic barrier between the intraorganismal apoplasm and the extraorganismal apoplasm and prevents lateral diffusion. The sequence is that of Casparian strip membrane protein 2 from Medicago truncatula (Barrel medic).